The following is a 551-amino-acid chain: Cilia- and flagella-associated protein 45 (551 aa).

Disordered stretches follow at residues 1–52, 232–256, and 385–415; these read MPLR…KSDS, MEIDRRESLQRQEDRERKRREERVR, and EQDALRAKRNQEVADREWRRKEKENAQKKIE. Residues 8-18 show a composition bias toward low complexity; that stretch reads ASSSASTASNR. A coiled-coil region spans residues 276–524; it reads AEHREQEKEQ…EDIKKQKLEE (249 aa). Basic and acidic residues predominate over residues 387–415; the sequence is DALRAKRNQEVADREWRRKEKENAQKKIE.

This sequence belongs to the CFAP45 family. In terms of assembly, microtubule inner protein component of sperm flagellar doublet microtubules. Interacts with AK8; dimerization with AK8 may create a cavity at the interface of the dimer that can accommodate AMP. Interacts with CFAP52. Interacts with ENKUR. Directly interacts with DNALI1. Interacts with DNAH11. Interacts with DNAI1. As to expression, expressed in respiratory cells and in sperm (at protein level).

Its subcellular location is the cytoplasm. It is found in the cytoskeleton. The protein resides in the cilium axoneme. It localises to the flagellum axoneme. The protein localises to the cell projection. Its subcellular location is the cilium. It is found in the flagellum. Its function is as follows. Microtubule inner protein (MIP) part of the dynein-decorated doublet microtubules (DMTs) in cilia axoneme, which is required for motile cilia beating. It is an AMP-binding protein that may facilitate dynein ATPase-dependent ciliary and flagellar beating via adenine nucleotide homeostasis. May function as a donor of AMP to AK8 and hence promote ADP production. In Mus musculus (Mouse), this protein is Cilia- and flagella-associated protein 45 (Cfap45).